The following is a 656-amino-acid chain: Macrolide export ATP-binding/permease protein MacB (656 aa).

The ABC transporter domain maps to 6 to 244 (LEVSACYRSF…AAPKTEVIPA (239 aa)). 42–49 (GASGSGKS) lines the ATP pocket. 4 helical membrane passes run 277-297 (FLTMLGIIIGIASVVSVVALG), 531-551 (LLISAIAVISLVVGGIGVMNI), 586-606 (LVCLCGGALGVALAYLIGVVF), and 621-641 (SIVAAFACSTLIGVLFGFLPA).

Belongs to the ABC transporter superfamily. Macrolide exporter (TC 3.A.1.122) family. Homodimer. Part of the tripartite efflux system MacAB-TolC, which is composed of an inner membrane transporter, MacB, a periplasmic membrane fusion protein, MacA, and an outer membrane component, TolC. The complex forms a large protein conduit and can translocate molecules across both the inner and outer membranes. Interacts with MacA.

The protein localises to the cell inner membrane. Its function is as follows. Part of the tripartite efflux system MacAB-TolC. MacB is a non-canonical ABC transporter that contains transmembrane domains (TMD), which form a pore in the inner membrane, and an ATP-binding domain (NBD), which is responsible for energy generation. Confers resistance against macrolides. The sequence is that of Macrolide export ATP-binding/permease protein MacB from Shewanella sp. (strain ANA-3).